The primary structure comprises 234 residues: Phosphoribosylaminoimidazole-succinocarboxamide synthase (234 aa).

Belongs to the SAICAR synthetase family.

The enzyme catalyses 5-amino-1-(5-phospho-D-ribosyl)imidazole-4-carboxylate + L-aspartate + ATP = (2S)-2-[5-amino-1-(5-phospho-beta-D-ribosyl)imidazole-4-carboxamido]succinate + ADP + phosphate + 2 H(+). It participates in purine metabolism; IMP biosynthesis via de novo pathway; 5-amino-1-(5-phospho-D-ribosyl)imidazole-4-carboxamide from 5-amino-1-(5-phospho-D-ribosyl)imidazole-4-carboxylate: step 1/2. This is Phosphoribosylaminoimidazole-succinocarboxamide synthase from Staphylococcus aureus (strain MRSA252).